A 569-amino-acid chain; its full sequence is Dihydroxy-acid dehydratase (569 aa).

Residue C61 coordinates [2Fe-2S] cluster. D93 contacts Mg(2+). C134 provides a ligand contact to [2Fe-2S] cluster. The Mg(2+) site is built by D135 and K136. K136 carries the post-translational modification N6-carboxylysine. [2Fe-2S] cluster is bound at residue C211. E462 serves as a coordination point for Mg(2+). S488 serves as the catalytic Proton acceptor.

This sequence belongs to the IlvD/Edd family. In terms of assembly, homodimer. [2Fe-2S] cluster is required as a cofactor. The cofactor is Mg(2+).

The enzyme catalyses (2R)-2,3-dihydroxy-3-methylbutanoate = 3-methyl-2-oxobutanoate + H2O. It carries out the reaction (2R,3R)-2,3-dihydroxy-3-methylpentanoate = (S)-3-methyl-2-oxopentanoate + H2O. It participates in amino-acid biosynthesis; L-isoleucine biosynthesis; L-isoleucine from 2-oxobutanoate: step 3/4. The protein operates within amino-acid biosynthesis; L-valine biosynthesis; L-valine from pyruvate: step 3/4. Functions in the biosynthesis of branched-chain amino acids. Catalyzes the dehydration of (2R,3R)-2,3-dihydroxy-3-methylpentanoate (2,3-dihydroxy-3-methylvalerate) into 2-oxo-3-methylpentanoate (2-oxo-3-methylvalerate) and of (2R)-2,3-dihydroxy-3-methylbutanoate (2,3-dihydroxyisovalerate) into 2-oxo-3-methylbutanoate (2-oxoisovalerate), the penultimate precursor to L-isoleucine and L-valine, respectively. The sequence is that of Dihydroxy-acid dehydratase from Tropheryma whipplei (strain TW08/27) (Whipple's bacillus).